Consider the following 344-residue polypeptide: tRNA N6-adenosine threonylcarbamoyltransferase (344 aa).

Fe cation-binding residues include His113 and His117. Substrate is bound by residues 135–139 (LVSGG), Asp169, Gly182, Asp186, and Asn278. Asp306 serves as a coordination point for Fe cation.

This sequence belongs to the KAE1 / TsaD family. Fe(2+) serves as cofactor.

The protein localises to the cytoplasm. The enzyme catalyses L-threonylcarbamoyladenylate + adenosine(37) in tRNA = N(6)-L-threonylcarbamoyladenosine(37) in tRNA + AMP + H(+). In terms of biological role, required for the formation of a threonylcarbamoyl group on adenosine at position 37 (t(6)A37) in tRNAs that read codons beginning with adenine. Is involved in the transfer of the threonylcarbamoyl moiety of threonylcarbamoyl-AMP (TC-AMP) to the N6 group of A37, together with TsaE and TsaB. TsaD likely plays a direct catalytic role in this reaction. The sequence is that of tRNA N6-adenosine threonylcarbamoyltransferase from Corynebacterium efficiens (strain DSM 44549 / YS-314 / AJ 12310 / JCM 11189 / NBRC 100395).